Consider the following 362-residue polypeptide: Phosphoserine aminotransferase (362 aa).

Arg42 lines the L-glutamate pocket. Residues 76–77 (AR), Trp102, Thr154, Asp174, and Gln197 contribute to the pyridoxal 5'-phosphate site. Lys198 carries the N6-(pyridoxal phosphate)lysine modification. Residue 239 to 240 (NT) participates in pyridoxal 5'-phosphate binding.

The protein belongs to the class-V pyridoxal-phosphate-dependent aminotransferase family. SerC subfamily. As to quaternary structure, homodimer. The cofactor is pyridoxal 5'-phosphate.

The protein resides in the cytoplasm. The enzyme catalyses O-phospho-L-serine + 2-oxoglutarate = 3-phosphooxypyruvate + L-glutamate. It carries out the reaction 4-(phosphooxy)-L-threonine + 2-oxoglutarate = (R)-3-hydroxy-2-oxo-4-phosphooxybutanoate + L-glutamate. Its pathway is amino-acid biosynthesis; L-serine biosynthesis; L-serine from 3-phospho-D-glycerate: step 2/3. It participates in cofactor biosynthesis; pyridoxine 5'-phosphate biosynthesis; pyridoxine 5'-phosphate from D-erythrose 4-phosphate: step 3/5. In terms of biological role, catalyzes the reversible conversion of 3-phosphohydroxypyruvate to phosphoserine and of 3-hydroxy-2-oxo-4-phosphonooxybutanoate to phosphohydroxythreonine. The polypeptide is Phosphoserine aminotransferase (Buchnera aphidicola subsp. Cinara cedri (strain Cc)).